The chain runs to 303 residues: Recombination-associated protein RdgC (303 aa).

The protein belongs to the RdgC family.

Its subcellular location is the cytoplasm. The protein localises to the nucleoid. May be involved in recombination. This is Recombination-associated protein RdgC from Edwardsiella ictaluri (strain 93-146).